Reading from the N-terminus, the 252-residue chain is Imidazole glycerol phosphate synthase subunit HisF (252 aa).

Catalysis depends on residues Asp11 and Asp130.

This sequence belongs to the HisA/HisF family. As to quaternary structure, heterodimer of HisH and HisF.

The protein resides in the cytoplasm. The catalysed reaction is 5-[(5-phospho-1-deoxy-D-ribulos-1-ylimino)methylamino]-1-(5-phospho-beta-D-ribosyl)imidazole-4-carboxamide + L-glutamine = D-erythro-1-(imidazol-4-yl)glycerol 3-phosphate + 5-amino-1-(5-phospho-beta-D-ribosyl)imidazole-4-carboxamide + L-glutamate + H(+). It participates in amino-acid biosynthesis; L-histidine biosynthesis; L-histidine from 5-phospho-alpha-D-ribose 1-diphosphate: step 5/9. Functionally, IGPS catalyzes the conversion of PRFAR and glutamine to IGP, AICAR and glutamate. The HisF subunit catalyzes the cyclization activity that produces IGP and AICAR from PRFAR using the ammonia provided by the HisH subunit. In Desulforamulus reducens (strain ATCC BAA-1160 / DSM 100696 / MI-1) (Desulfotomaculum reducens), this protein is Imidazole glycerol phosphate synthase subunit HisF.